The following is a 277-amino-acid chain: Diaminopimelate epimerase (277 aa).

Positions 13, 46, and 66 each coordinate substrate. Catalysis depends on cysteine 75, which acts as the Proton donor. Residues 76-77, asparagine 160, asparagine 193, and 211-212 each bind substrate; these read GN and ER. Cysteine 220 (proton acceptor) is an active-site residue. 221 to 222 lines the substrate pocket; that stretch reads GS.

The protein belongs to the diaminopimelate epimerase family. In terms of assembly, homodimer.

The protein localises to the cytoplasm. It catalyses the reaction (2S,6S)-2,6-diaminopimelate = meso-2,6-diaminopimelate. It functions in the pathway amino-acid biosynthesis; L-lysine biosynthesis via DAP pathway; DL-2,6-diaminopimelate from LL-2,6-diaminopimelate: step 1/1. Catalyzes the stereoinversion of LL-2,6-diaminopimelate (L,L-DAP) to meso-diaminopimelate (meso-DAP), a precursor of L-lysine and an essential component of the bacterial peptidoglycan. The protein is Diaminopimelate epimerase of Legionella pneumophila (strain Lens).